The sequence spans 107 residues: Putative double-stranded DNA mimic protein NTHI1680 (107 aa).

This sequence belongs to the putative dsDNA mimic protein family.

Functionally, may act as a double-stranded DNA (dsDNA) mimic. Probably regulates the activity of a dsDNA-binding protein. This chain is Putative double-stranded DNA mimic protein NTHI1680, found in Haemophilus influenzae (strain 86-028NP).